An 837-amino-acid chain; its full sequence is Anaphase-promoting complex subunit 2 (837 aa).

Phosphoserine is present on residues Ser233, Ser329, Ser485, Ser549, and Ser712. Positions 478–508 are disordered; it reads CLETGQDSEDDSGEPEDWVPDPVDADPVKSS. A compositionally biased stretch (acidic residues) spans 483–496; sequence QDSEDDSGEPEDWV. Residue Tyr825 is modified to Phosphotyrosine.

The protein belongs to the cullin family. In terms of assembly, the mammalian APC/C is composed at least of 14 distinct subunits ANAPC1, ANAPC2, CDC27/APC3, ANAPC4, ANAPC5, CDC16/APC6, ANAPC7, CDC23/APC8, ANAPC10, ANAPC11, CDC26/APC12, ANAPC13, ANAPC15 and ANAPC16 that assemble into a complex of at least 19 chains with a combined molecular mass of around 1.2 MDa; APC/C interacts with FZR1 and FBXO5. In the context of the APC/C complex, directly interacts with UBE2C and UBE2S. Interacts (via cullin domain) with ANAPC11 and with UBCH10. Interacts with NEUROD2. Interacts with FBXO43; the interaction is direct.

It participates in protein modification; protein ubiquitination. In terms of biological role, together with the RING-H2 protein ANAPC11, constitutes the catalytic component of the anaphase promoting complex/cyclosome (APC/C), a cell cycle-regulated E3 ubiquitin ligase that controls progression through mitosis and the G1 phase of the cell cycle. The APC/C complex acts by mediating ubiquitination and subsequent degradation of target proteins: it mainly mediates the formation of 'Lys-11'-linked polyubiquitin chains and, to a lower extent, the formation of 'Lys-48'- and 'Lys-63'-linked polyubiquitin chains. The APC/C complex catalyzes assembly of branched 'Lys-11'-/'Lys-48'-linked branched ubiquitin chains on target proteins. The CDC20-APC/C complex positively regulates the formation of synaptic vesicle clustering at active zone to the presynaptic membrane in postmitotic neurons. CDC20-APC/C-induced degradation of NEUROD2 drives presynaptic differentiation. This chain is Anaphase-promoting complex subunit 2 (Anapc2), found in Mus musculus (Mouse).